The chain runs to 391 residues: Casein kinase II subunit alpha 3 (391 aa).

The region spanning 39–324 (YQLVRKLGRG…AREAMEHPYF (286 aa)) is the Protein kinase domain. ATP is bound by residues 45-53 (LGRGKYSEV) and K68. D156 functions as the Proton acceptor in the catalytic mechanism.

Belongs to the protein kinase superfamily. Ser/Thr protein kinase family. CK2 subfamily. As to quaternary structure, heterotetramer composed of two catalytic subunits (alpha chain and/or alpha' chain) and two regulatory subunits (beta chains). Interacts with PML. As to expression, detected in blood platelets and megakaryocyte cell lines. Poorly expressed in lung. Highly expressed in lung tumor tissues.

It catalyses the reaction L-seryl-[protein] + ATP = O-phospho-L-seryl-[protein] + ADP + H(+). It carries out the reaction L-threonyl-[protein] + ATP = O-phospho-L-threonyl-[protein] + ADP + H(+). In terms of biological role, probable catalytic subunit of a constitutively active serine/threonine-protein kinase complex that phosphorylates a large number of substrates containing acidic residues C-terminal to the phosphorylated serine or threonine. Amplification-dependent oncogene; promotes cell proliferation and tumorigenesis by down-regulating expression of the tumor suppressor protein, PML. May play a role in the pathogenesis of the lung cancer development and progression. The chain is Casein kinase II subunit alpha 3 (CSNK2A3) from Homo sapiens (Human).